The chain runs to 909 residues: Protein translocase subunit SecA (909 aa).

ATP-binding positions include Q87 and G105 to T109. The tract at residues L246–I265 is disordered. The span at E254–I265 shows a compositional bias: basic and acidic residues. D512 lines the ATP pocket. Positions E834–T858 are enriched in basic and acidic residues. The interval E834 to L899 is disordered. Over residues A859 to A875 the composition is skewed to low complexity. Residues C893, C895, C904, and H905 each contribute to the Zn(2+) site.

Belongs to the SecA family. Monomer and homodimer. Part of the essential Sec protein translocation apparatus which comprises SecA, SecYEG and auxiliary proteins SecDF-YajC and YidC. It depends on Zn(2+) as a cofactor.

Its subcellular location is the cell inner membrane. It localises to the cytoplasm. The enzyme catalyses ATP + H2O + cellular proteinSide 1 = ADP + phosphate + cellular proteinSide 2.. Its function is as follows. Part of the Sec protein translocase complex. Interacts with the SecYEG preprotein conducting channel. Has a central role in coupling the hydrolysis of ATP to the transfer of proteins into and across the cell membrane, serving both as a receptor for the preprotein-SecB complex and as an ATP-driven molecular motor driving the stepwise translocation of polypeptide chains across the membrane. This is Protein translocase subunit SecA from Pseudoalteromonas atlantica (strain T6c / ATCC BAA-1087).